The primary structure comprises 277 residues: Carbonyl reductase [NADPH] 1 (277 aa).

NADP(+) is bound by residues Val-10–Leu-34, Asp-63–Ile-64, and Asn-90. Position 30 is a phosphoserine (Ser-30). Residues Phe-95 to Met-97 and Gln-106 contribute to the glutathione site. Ser-140 is a binding site for substrate. Residue Ala-193–Tyr-194 coordinates glutathione. Tyr-194 acts as the Proton acceptor in catalysis. NADP(+) is bound by residues Tyr-194–Lys-198 and Val-231–Thr-233.

Belongs to the short-chain dehydrogenases/reductases (SDR) family. As to quaternary structure, monomer. Present in liver and kidney.

The protein localises to the cytoplasm. It catalyses the reaction a secondary alcohol + NADP(+) = a ketone + NADPH + H(+). The enzyme catalyses prostaglandin F2alpha + NADP(+) = prostaglandin E2 + NADPH + H(+). It carries out the reaction prostaglandin E1 + NADP(+) = 15-oxoprostaglandin E1 + NADPH + H(+). The catalysed reaction is menadione + NADPH + H(+) = menadiol + NADP(+). It catalyses the reaction prostaglandin D2 + NADP(+) = 15-oxoprostaglandin D2 + NADPH + H(+). The enzyme catalyses prostaglandin E2 + NADP(+) = 15-oxoprostaglandin E2 + NADPH + H(+). It carries out the reaction prostaglandin F2alpha + NADP(+) = 15-oxoprostaglandin F2alpha + NADPH + H(+). The catalysed reaction is daunorubicin + NADPH + H(+) = 13-dihydrodaunorubicin + NADP(+). It catalyses the reaction S-nitrosoglutathione + NADPH + H(+) = S-(hydroxysulfenamide)glutathione + NADP(+). The enzyme catalyses a primary alcohol + NADP(+) = an aldehyde + NADPH + H(+). It carries out the reaction cortisol + NADPH + H(+) = 20beta-dihydrocortisol + NADP(+). The catalysed reaction is corticosterone + NADPH + H(+) = 20beta-dihydrocorticosterone + NADP(+). In terms of biological role, NADPH-dependent reductase with broad substrate specificity. Catalyzes the reduction of a wide variety of carbonyl compounds including quinones, prostaglandins, menadione, plus various xenobiotics. Catalyzes the reduction of the antitumor anthracyclines doxorubicin and daunorubicin to the cardiotoxic compounds doxorubicinol and daunorubicinol. Can convert prostaglandin E to prostaglandin F2-alpha. Can bind glutathione, which explains its higher affinity for glutathione-conjugated substrates. Catalyzes the reduction of S-nitrosoglutathione. In addition, participates in the glucocorticoid metabolism by catalyzing the NADPH-dependent cortisol/corticosterone into 20beta-dihydrocortisol (20b-DHF) or 20beta-corticosterone (20b-DHB), which are weak agonists of NR3C1 and NR3C2 in adipose tissue. This is Carbonyl reductase [NADPH] 1 from Oryctolagus cuniculus (Rabbit).